We begin with the raw amino-acid sequence, 197 residues long: Holliday junction branch migration complex subunit RuvA (197 aa).

Positions 1 to 63 (MIALLNGQLI…EDALLLFGFL (63 aa)) are domain I. The segment at 64 to 142 (TETEKDLFGL…PVQAVPGNAP (79 aa)) is domain II. The interval 142–146 (PLPAE) is flexible linker. A domain III region spans residues 147-197 (TAGDLREDALSALVNLGYKENLSRKALDGIDTAPDAPLEDILKQALKLLMR).

Belongs to the RuvA family. In terms of assembly, homotetramer. Forms an RuvA(8)-RuvB(12)-Holliday junction (HJ) complex. HJ DNA is sandwiched between 2 RuvA tetramers; dsDNA enters through RuvA and exits via RuvB. An RuvB hexamer assembles on each DNA strand where it exits the tetramer. Each RuvB hexamer is contacted by two RuvA subunits (via domain III) on 2 adjacent RuvB subunits; this complex drives branch migration. In the full resolvosome a probable DNA-RuvA(4)-RuvB(12)-RuvC(2) complex forms which resolves the HJ.

It localises to the cytoplasm. Functionally, the RuvA-RuvB-RuvC complex processes Holliday junction (HJ) DNA during genetic recombination and DNA repair, while the RuvA-RuvB complex plays an important role in the rescue of blocked DNA replication forks via replication fork reversal (RFR). RuvA specifically binds to HJ cruciform DNA, conferring on it an open structure. The RuvB hexamer acts as an ATP-dependent pump, pulling dsDNA into and through the RuvAB complex. HJ branch migration allows RuvC to scan DNA until it finds its consensus sequence, where it cleaves and resolves the cruciform DNA. The polypeptide is Holliday junction branch migration complex subunit RuvA (Syntrophotalea carbinolica (strain DSM 2380 / NBRC 103641 / GraBd1) (Pelobacter carbinolicus)).